Consider the following 331-residue polypeptide: Probable allantoicase (331 aa).

Belongs to the allantoicase family.

It carries out the reaction allantoate + H2O = (S)-ureidoglycolate + urea. It participates in nitrogen metabolism; (S)-allantoin degradation; (S)-ureidoglycolate from allantoate (aminidohydrolase route): step 1/1. The chain is Probable allantoicase from Pseudomonas syringae pv. syringae (strain B728a).